The sequence spans 418 residues: Tyrosine--tRNA ligase (418 aa).

Tyrosine 34 contributes to the L-tyrosine binding site. The 'HIGH' region motif lies at proline 39–histidine 48. The L-tyrosine site is built by tyrosine 169 and glutamine 173. The short motif at lysine 229–serine 233 is the 'KMSKS' region element. ATP is bound at residue lysine 232. In terms of domain architecture, S4 RNA-binding spans leucine 352–tyrosine 418.

Belongs to the class-I aminoacyl-tRNA synthetase family. TyrS type 1 subfamily. As to quaternary structure, homodimer.

It localises to the cytoplasm. The catalysed reaction is tRNA(Tyr) + L-tyrosine + ATP = L-tyrosyl-tRNA(Tyr) + AMP + diphosphate + H(+). Catalyzes the attachment of tyrosine to tRNA(Tyr) in a two-step reaction: tyrosine is first activated by ATP to form Tyr-AMP and then transferred to the acceptor end of tRNA(Tyr). This is Tyrosine--tRNA ligase from Streptococcus equi subsp. zooepidemicus (strain H70).